A 230-amino-acid chain; its full sequence is MKRGKKYLEAVKLYDKSVAYTGLEAVELAKKTSVAKFDATVEVAFRLNVDPRKADQNLRGAISLPHGTGKTVRVVVIAKPEKAKEALAAGALEAGDVELIDKIGKGWFDFDVMVATPDMMAQLGKLGRVLGPKGLMPNPKTGTVTLDVAKAVEEIKAGKIEYRTDKVGNIHAPIGKVSFDSNKLHENMLAIYNQLVRIKPATVKGTYIKKIALSTTMGPGIMVEENNIKK.

The protein belongs to the universal ribosomal protein uL1 family. In terms of assembly, part of the 50S ribosomal subunit.

In terms of biological role, binds directly to 23S rRNA. The L1 stalk is quite mobile in the ribosome, and is involved in E site tRNA release. Functionally, protein L1 is also a translational repressor protein, it controls the translation of the L11 operon by binding to its mRNA. This Acholeplasma laidlawii (strain PG-8A) protein is Large ribosomal subunit protein uL1.